The chain runs to 290 residues: Large ribosomal subunit protein uL2m (290 aa).

It belongs to the universal ribosomal protein uL2 family. Probably part of the large ribosomal subunit.

The protein localises to the hydrogenosome. This is Large ribosomal subunit protein uL2m (rpl2) from Nyctotherus ovalis.